A 208-amino-acid polypeptide reads, in one-letter code: MSSQYSNVENLSPQTIRQVMKELQDMETTPPEGIKVLINESDVTDIQAFIDGPAGTPYAVGVFRVKLTLSKDFPQTPPKAYFLTKIFHPNVASNGEICVNTLKKDWKPDLGIKHILLTIKCLLIVPNPESALNEEAGKMLLERYDDYSQRARMMTEIHAQPAKCGAGASDAKDDDGPSTKKHAGLDKKLQDKKKEKLLKEKKRMLKRL.

A UBC core domain is found at 14–160; that stretch reads QTIRQVMKEL…ARMMTEIHAQ (147 aa). Catalysis depends on C98, which acts as the Glycyl thioester intermediate. The interval 161-193 is disordered; sequence PAKCGAGASDAKDDDGPSTKKHAGLDKKLQDKK. The segment covering 170–193 has biased composition (basic and acidic residues); it reads DAKDDDGPSTKKHAGLDKKLQDKK.

It belongs to the ubiquitin-conjugating enzyme family.

It carries out the reaction S-ubiquitinyl-[E1 ubiquitin-activating enzyme]-L-cysteine + [E2 ubiquitin-conjugating enzyme]-L-cysteine = [E1 ubiquitin-activating enzyme]-L-cysteine + S-ubiquitinyl-[E2 ubiquitin-conjugating enzyme]-L-cysteine.. It participates in protein modification; protein ubiquitination. Its function is as follows. Catalyzes the covalent attachment of ubiquitin to other proteins. Acts as an essential factor of the anaphase promoting complex/cyclosome (APC/C), a cell cycle-regulated ubiquitin ligase that controls progression through mitosis. Acts by specifically elongating polyubiquitin chains initiated by the E2 enzyme vih/UbcH10 on APC/C substrates, enhancing the degradation of APC/C substrates by the proteasome and promoting mitotic exit. The protein is Ubiquitin-conjugating enzyme E2 S of Drosophila virilis (Fruit fly).